A 402-amino-acid polypeptide reads, in one-letter code: S-adenosylmethionine synthase (402 aa).

An ATP-binding site is contributed by H15. Mg(2+) is bound at residue D17. E43 is a binding site for K(+). L-methionine-binding residues include E56 and Q99. Residues 99 to 109 (QSPDIAQGVDT) are flexible loop. ATP is bound by residues 174–176 (DGK), 247–248 (RF), D256, 262–263 (RK), A279, and K283. D256 contributes to the L-methionine binding site. Residue K287 participates in L-methionine binding.

Belongs to the AdoMet synthase family. Homotetramer; dimer of dimers. Requires Mg(2+) as cofactor. It depends on K(+) as a cofactor.

The protein resides in the cytoplasm. The enzyme catalyses L-methionine + ATP + H2O = S-adenosyl-L-methionine + phosphate + diphosphate. Its pathway is amino-acid biosynthesis; S-adenosyl-L-methionine biosynthesis; S-adenosyl-L-methionine from L-methionine: step 1/1. Functionally, catalyzes the formation of S-adenosylmethionine (AdoMet) from methionine and ATP. The overall synthetic reaction is composed of two sequential steps, AdoMet formation and the subsequent tripolyphosphate hydrolysis which occurs prior to release of AdoMet from the enzyme. The protein is S-adenosylmethionine synthase of Streptomyces griseus subsp. griseus (strain JCM 4626 / CBS 651.72 / NBRC 13350 / KCC S-0626 / ISP 5235).